The chain runs to 835 residues: Microcephalin (835 aa).

The 93-residue stretch at 1–93 (MAAPILKDVV…AHIDESLFPA (93 aa)) folds into the BRCT 1 domain. Residues 184-206 (KEKRENLSPTSSQLIQQSHDNPS) form a disordered region. Over residues 190-206 (LSPTSSQLIQQSHDNPS) the composition is skewed to polar residues. Phosphoserine occurs at positions 279, 287, 296, and 333. T335 bears the Phosphothreonine mark. Over residues 346 to 361 (HSRPRSSSVKRKRVSH) the composition is skewed to basic residues. Disordered stretches follow at residues 346-376 (HSRP…RKRS) and 418-442 (PDNL…PAQF). A Phosphoserine modification is found at S548. Residues 557-582 (GLKSTQNRGTTSKISNSSEGEAQSEH) form a disordered region. The segment covering 559–577 (KSTQNRGTTSKISNSSEGE) has biased composition (polar residues). BRCT domains are found at residues 640-730 (SGRG…PFEL) and 751-833 (YRGT…NYLL).

As to quaternary structure, interacts with CDC27 and maybe other components of the APC/C complex. Interacts with histone variant H2AX under DNA damage conditions.

The protein localises to the cytoplasm. It is found in the cytoskeleton. The protein resides in the microtubule organizing center. Its subcellular location is the centrosome. Its function is as follows. Implicated in chromosome condensation and DNA damage induced cellular responses. May play a role in neurogenesis and regulation of the size of the cerebral cortex. This Gorilla gorilla gorilla (Western lowland gorilla) protein is Microcephalin.